Here is a 116-residue protein sequence, read N- to C-terminus: Mercuric transport protein MerT (116 aa).

The next 2 membrane-spanning stretches (helical) occupy residues 16–36 (LAAI…ALGF) and 46–66 (VLEP…FFAW). Hg(2+)-binding residues include Cys-24 and Cys-25. Hg(2+) contacts are provided by Cys-76 and Cys-82. Residues 94-114 (IFWVVAALVLVALGFPYVMPF) form a helical membrane-spanning segment.

It belongs to the MerT family.

The protein localises to the cell inner membrane. Functionally, involved in mercury resistance. Probably transfers a mercuric ion from the periplasmic Hg(2+)-binding protein MerP to the cytoplasmic mercuric reductase MerA. The protein is Mercuric transport protein MerT of Serratia marcescens.